The primary structure comprises 152 residues: Transcriptional regulator MraZ (152 aa).

2 consecutive SpoVT-AbrB domains span residues 5–52 and 81–124; these read ATLV…TLPE and ASEC…DEQV.

This sequence belongs to the MraZ family. In terms of assembly, forms oligomers.

It localises to the cytoplasm. It is found in the nucleoid. In terms of biological role, negatively regulates its own expression and that of the subsequent genes in the proximal part of the division and cell wall (dcw) gene cluster. Acts by binding directly to DNA. May also regulate the expression of genes outside the dcw cluster. In Proteus mirabilis (strain HI4320), this protein is Transcriptional regulator MraZ.